Here is a 101-residue protein sequence, read N- to C-terminus: uncharacterized protein (101 aa).

Functionally, may regulate the expression of phage structural components with protein P13. This is an uncharacterized protein from Pseudoalteromonas phage PM2 (Bacteriophage PM2).